A 532-amino-acid polypeptide reads, in one-letter code: Wee1-like protein kinase 2 (532 aa).

Residues isoleucine 123 to serine 166 form a disordered region. The Protein kinase domain maps to phenylalanine 188–alanine 465. Residues isoleucine 194–valine 202 and lysine 217 each bind ATP. Aspartate 315 functions as the Proton acceptor in the catalytic mechanism. Mg(2+) is bound by residues asparagine 320 and aspartate 354. Residues alanine 469 to leucine 495 adopt a coiled-coil conformation.

This sequence belongs to the protein kinase superfamily. Ser/Thr protein kinase family. WEE1 subfamily.

The protein localises to the nucleus. The enzyme catalyses L-tyrosyl-[protein] + ATP = O-phospho-L-tyrosyl-[protein] + ADP + H(+). Oocyte-specific protein tyrosine kinase that phosphorylates and inhibits cdk1 and acts as a key regulator of meiosis. Required to maintain meiotic arrest in oocytes by phosphorylating cdk1 at 'Tyr-15', leading to inhibit cdk1 activity and prevent meiotic reentry. This chain is Wee1-like protein kinase 2 (wee2), found in Danio rerio (Zebrafish).